Reading from the N-terminus, the 246-residue chain is 3-deoxy-manno-octulosonate cytidylyltransferase (246 aa).

This sequence belongs to the KdsB family.

It is found in the cytoplasm. It catalyses the reaction 3-deoxy-alpha-D-manno-oct-2-ulosonate + CTP = CMP-3-deoxy-beta-D-manno-octulosonate + diphosphate. Its pathway is nucleotide-sugar biosynthesis; CMP-3-deoxy-D-manno-octulosonate biosynthesis; CMP-3-deoxy-D-manno-octulosonate from 3-deoxy-D-manno-octulosonate and CTP: step 1/1. It functions in the pathway bacterial outer membrane biogenesis; lipopolysaccharide biosynthesis. In terms of biological role, activates KDO (a required 8-carbon sugar) for incorporation into bacterial lipopolysaccharide in Gram-negative bacteria. This is 3-deoxy-manno-octulosonate cytidylyltransferase from Leptospira biflexa serovar Patoc (strain Patoc 1 / Ames).